The sequence spans 541 residues: Circadian clock oscillator protein KaiC (541 aa).

Residues 1–40 are disordered; it reads MNQSLGPSEPEKPQDNTAEDSTEPTPDNHRADLSELRGIP. KaiC domains are found at residues 21 to 268 and 282 to 541; these read STEP…INIF and VRVS…EEGL. The segment covering 26-35 has biased composition (basic and acidic residues); it reads PDNHRADLSE. ATP-binding residues include G70, T71, G72, K73, T74, L75, S110, K245, L246, R247, T249, H251, T261, T311, G312, T313, G314, K315, and T316. T74 contributes to the Mg(2+) binding site. 2 residues coordinate Mg(2+): T316 and E339. W352 provides a ligand contact to ATP. S452 bears the Phosphoserine; by autocatalysis mark. T453 bears the Phosphothreonine; by autocatalysis mark. ATP-binding residues include R472, K478, M479, R480, S482, H484, and K486.

It belongs to the KaiC family. Homohexamer; hexamerization is dependent on ATP-binding. The KaiABC complex composition changes during the circadian cycle to control KaiC phosphorylation. Complexes KaiC(6), KaiA(2-4):KaiC(6), KaiB(6):KaiC(6) and KaiC(6):KaiB(6):KaiA(12) are among the most important forms, many form cooperatively. KaiC interacts with SasA, activating its autokinase function and leading to RpaA activation. Mg(2+) is required as a cofactor. In terms of processing, phosphorylated on serine and threonine residues by autocatalysis. Has a 4 step phosphorylation cycle; the autokinase acts first on Thr-453, then Ser-452. When Ser-452 is modified KaiC switches to an autophosphatase mode, acting first on phospho-Thr-453 then phospho-Ser-452.

It carries out the reaction L-seryl-[protein] + ATP = O-phospho-L-seryl-[protein] + ADP + H(+). The enzyme catalyses L-threonyl-[protein] + ATP = O-phospho-L-threonyl-[protein] + ADP + H(+). It catalyses the reaction ATP + H2O = ADP + phosphate + H(+). Its activity is regulated as follows. The interaction with KaiA enhances its phosphorylation status, while the interaction with KaiB decreases it. Its function is as follows. Central component of the KaiABC oscillator complex, which constitutes the main circadian regulator in cyanobacteria. Complex composition changes during the circadian cycle to control KaiC phosphorylation. KaiA stimulates KaiC autophosphorylation, while KaiB sequesters KaiA, leading to KaiC autodephosphorylation. Clock output pathways impact the RpaA transcriptional regulator. KaiC enhances the autophosphorylation activity of SasA, which then transfers its phosphate group to RpaA to activate it. KaiB and KaiC together enhance the phospho-RpaA dephosphatase activity of CikA. Functionally, has a weak, temperature-independent ATPase activity; ATPase activity defines the circadian period. The phosphorylation state of KaiC modulates its ATPase activity and effects KaiB binding. In Parathermosynechococcus lividus (Thermostichus lividus), this protein is Circadian clock oscillator protein KaiC.